Here is a 194-residue protein sequence, read N- to C-terminus: Mu-like prophage FluMu protein gp37 (194 aa).

It to phage Mu protein gp37.

The sequence is that of Mu-like prophage FluMu protein gp37 from Haemophilus influenzae (strain ATCC 51907 / DSM 11121 / KW20 / Rd).